Reading from the N-terminus, the 479-residue chain is RHO1 GEF localizing protein 1 (479 aa).

The interval 460–479 is disordered; it reads SQKDPSRTDPSKLRRVPVIQ.

Functionally, regulator of RHO1 signaling that acts as a cofactor required for the efficient localization of the TUS1 GTP exchange factor (GEF) for RHO1 to the bud neck during all phases of cytokinesis. RHO1 is a key, essential hub protein in the cell wall integrity (CWI) pathway in which activated RHO1-GTP binds directly to and activates multiple different downstream effectors required for cell wall synthesis and actin assembly during cytokinesis. The chain is RHO1 GEF localizing protein 1 from Saccharomyces cerevisiae (strain ATCC 204508 / S288c) (Baker's yeast).